The primary structure comprises 948 residues: Protocadherin alpha-2 (948 aa).

The first 22 residues, 1-22 (MASSIRRGRGAWTRLLSLLLLA), serve as a signal peptide directing secretion. Over 23–697 (AWEVGSGQLR…GSEATLVDVN (675 aa)) the chain is Extracellular. 6 Cadherin domains span residues 30-133 (QLRY…PPIF), 157-242 (ASDA…EPTF), 243-350 (AQSV…TPEV), 351-455 (SITS…APAF), 456-565 (AQPE…APAL), and 588-678 (GHVV…APKA). N257, N265, N362, and N548 each carry an N-linked (GlcNAc...) asparagine glycan. A helical transmembrane segment spans residues 698–718 (VYLIIAICAVSSLLVLTVLLY). The Cytoplasmic portion of the chain corresponds to 719–948 (TALRCSVPPT…GNSTTDNSDQ (230 aa)). The stretch at 734–737 (PGKP) is one PXXP 1 repeat. The tract at residues 734 to 892 (PGKPTLVCSS…PDKFIIPGSP (159 aa)) is 5 X 4 AA repeats of P-X-X-P. Disordered stretches follow at residues 754–801 (RRQR…RQPN), 829–854 (GPGG…EVSP), and 868–948 (KYGP…NSDQ). The segment covering 783–795 (AEEKQLSESEYVG) has biased composition (basic and acidic residues). PXXP repeat units lie at residues 797-800 (PRQP), 830-833 (PGGP), 871-874 (PGNP), and 889-892 (PGSP). Residues 907–921 (DKSDFITFGKKEETK) are compositionally biased toward basic and acidic residues.

Its subcellular location is the cell membrane. Potential calcium-dependent cell-adhesion protein. May be involved in the establishment and maintenance of specific neuronal connections in the brain. The sequence is that of Protocadherin alpha-2 (PCDHA2) from Homo sapiens (Human).